The sequence spans 72 residues: Translation initiation factor IF-1 (72 aa).

The 72-residue stretch at 1-72 folds into the S1-like domain; sequence MSDKSIKMQA…SNGRITYRHK (72 aa).

The protein belongs to the IF-1 family. As to quaternary structure, component of the 30S ribosomal translation pre-initiation complex which assembles on the 30S ribosome in the order IF-2 and IF-3, IF-1 and N-formylmethionyl-tRNA(fMet); mRNA recruitment can occur at any time during PIC assembly.

It is found in the cytoplasm. Functionally, one of the essential components for the initiation of protein synthesis. Stabilizes the binding of IF-2 and IF-3 on the 30S subunit to which N-formylmethionyl-tRNA(fMet) subsequently binds. Helps modulate mRNA selection, yielding the 30S pre-initiation complex (PIC). Upon addition of the 50S ribosomal subunit IF-1, IF-2 and IF-3 are released leaving the mature 70S translation initiation complex. This chain is Translation initiation factor IF-1, found in Mycoplasmopsis pulmonis (strain UAB CTIP) (Mycoplasma pulmonis).